A 409-amino-acid polypeptide reads, in one-letter code: Cuticle-degrading serine protease (409 aa).

An N-terminal signal peptide occupies residues 1–21 (MLTNGLISLLAIAGLATNAFA). Positions 22-123 (GPIRKVSNAG…VEQDTVVTTY (102 aa)) are excised as a propeptide. The region spanning 39 to 122 (KYIVVLKKGL…YVEQDTVVTT (84 aa)) is the Inhibitor I9 domain. In terms of domain architecture, Peptidase S8 spans 130-409 (TWGLDRISHE…PNKIAYNGYA (280 aa)). The active-site Charge relay system is Asp-164. The N-linked (GlcNAc...) asparagine glycan is linked to Asn-178. His-200 functions as the Charge relay system in the catalytic mechanism. An N-linked (GlcNAc...) asparagine glycan is attached at Asn-252. Ser-353 acts as the Charge relay system in catalysis.

Belongs to the peptidase S8 family.

Its subcellular location is the secreted. Its activity is regulated as follows. Inhibited by PMSF, SSI, the peptide Phe-Val and by Phe, but not by EDTA. Functionally, hydrolyzes gelatin, casein, the chromogenic substrate azocoll and the cuticle of the nematode P.redivivus. Immobilizes P.redivivus. The chain is Cuticle-degrading serine protease from Arthrobotrys oligospora (strain ATCC 24927 / CBS 115.81 / DSM 1491) (Nematode-trapping fungus).